The sequence spans 326 residues: ELAV-like protein 1 (326 aa).

RRM domains are found at residues 20–98, 106–186, and 244–322; these read TNLI…VARP, ANLY…FAAN, and WCIF…FKTS.

It belongs to the RRM elav family. Interacts (via RRM3) with cirbp. Unable to form oligomers. Part of a ribonucleoprotein (RNP) complex, at least composed of elavl1/elrA and/or elavl2/elrB, igf2bp3/vg1RBP, ddx6/Xp54, ybx2/frgy2, lsm14b/rap55b and, in a subset of RNP complexes, stau1/staufen.

Its subcellular location is the cytoplasm. The protein localises to the cell cortex. Its function is as follows. RNA-binding protein that binds to the 3'-UTR region of mRNAs and increases their stability. Involved in embryonic stem cells (ESCs) differentiation: preferentially binds mRNAs that are not methylated by N6-methyladenosine (m6A), stabilizing them, promoting ESCs differentiation. Binds to poly-U elements and AU-rich elements (AREs) in the 3'-UTR of target mRNAs. Acts cooperatively with cribp to stabilize AU-rich sequence (ARE)-containing mRNAs. May play a role during gastrulation. Required for the vegetal localization of vg1 mRNA. The sequence is that of ELAV-like protein 1 from Xenopus tropicalis (Western clawed frog).